A 625-amino-acid chain; its full sequence is Threonine--tRNA ligase (625 aa).

The segment at 1 to 143 is editing domain; that stretch reads MRILLIHSDY…ELSRTIIPEG (143 aa). Positions 206–505 are catalytic; the sequence is PHVKLMLEHE…MQEGKKPMLP (300 aa). 3 residues coordinate Zn(2+): Cys-298, His-350, and His-474.

Belongs to the class-II aminoacyl-tRNA synthetase family. In terms of assembly, homodimer. The cofactor is Zn(2+).

Its subcellular location is the cytoplasm. It catalyses the reaction tRNA(Thr) + L-threonine + ATP = L-threonyl-tRNA(Thr) + AMP + diphosphate + H(+). Functionally, catalyzes the attachment of threonine to tRNA(Thr) in a two-step reaction: L-threonine is first activated by ATP to form Thr-AMP and then transferred to the acceptor end of tRNA(Thr). Also edits incorrectly charged L-seryl-tRNA(Thr). This chain is Threonine--tRNA ligase, found in Pyrococcus horikoshii (strain ATCC 700860 / DSM 12428 / JCM 9974 / NBRC 100139 / OT-3).